A 358-amino-acid chain; its full sequence is uncharacterized protein (358 aa).

This is an uncharacterized protein from Klebsiella pneumoniae.